We begin with the raw amino-acid sequence, 344 residues long: RNA 3'-terminal phosphate cyclase (344 aa).

ATP is bound by residues Gln-103 and 283-287 (HLADQ). His-308 serves as the catalytic Tele-AMP-histidine intermediate.

It belongs to the RNA 3'-terminal cyclase family. Type 1 subfamily.

The protein resides in the cytoplasm. It catalyses the reaction a 3'-end 3'-phospho-ribonucleotide-RNA + ATP = a 3'-end 2',3'-cyclophospho-ribonucleotide-RNA + AMP + diphosphate. Its function is as follows. Catalyzes the conversion of 3'-phosphate to a 2',3'-cyclic phosphodiester at the end of RNA. The mechanism of action of the enzyme occurs in 3 steps: (A) adenylation of the enzyme by ATP; (B) transfer of adenylate to an RNA-N3'P to produce RNA-N3'PP5'A; (C) and attack of the adjacent 2'-hydroxyl on the 3'-phosphorus in the diester linkage to produce the cyclic end product. The biological role of this enzyme is unknown but it is likely to function in some aspects of cellular RNA processing. In Salmonella paratyphi C (strain RKS4594), this protein is RNA 3'-terminal phosphate cyclase.